The primary structure comprises 507 residues: Keratin, type II cuticular Hb5 (507 aa).

A head region spans residues 1 to 123 (MSCRSYRISS…PNAQCVKQEE (123 aa)). The region spanning 123 to 434 (EKEQIKSLNS…RLLEGEEHRL (312 aa)) is the IF rod domain. Residues 124–158 (KEQIKSLNSRFAAFIDKVRFLEQQNKLLETKWQFY) are coil 1A. The tract at residues 159-168 (QNQRCCESNL) is linker 1. Residues 169–269 (EPLFSGYIET…YEEEIRVLQA (101 aa)) are coil 1B. A Glycyl lysine isopeptide (Lys-Gly) (interchain with G-Cter in SUMO1) cross-link involves residue K229. The tract at residues 270–286 (HISDTSVIVKMDNSRDL) is linker 12. The segment at 287–430 (NMDCIIAEIK…ATYRRLLEGE (144 aa)) is coil 2. A tail region spans residues 431 to 507 (EHRLCEGVGS…CGSSRSVRFA (77 aa)).

It belongs to the intermediate filament family. Heterotetramer of two type I and two type II keratins. As to expression, synthesis occurs immediately above a small population of matrix cells at the base of the hair bulb and the trichocytes lining the dermal papilla and extends upward through the matrix and ends in the lower part of the cortex of the hair shaft.

This is Keratin, type II cuticular Hb5 (KRT85) from Homo sapiens (Human).